Here is a 369-residue protein sequence, read N- to C-terminus: Glutamate 5-kinase (369 aa).

Residue Lys14 coordinates ATP. 3 residues coordinate substrate: Ser56, Asp143, and Asn155. Residues Ser175–Asp176 and Thr215–Lys221 each bind ATP. Residues Ala277–Asp351 enclose the PUA domain.

The protein belongs to the glutamate 5-kinase family.

It is found in the cytoplasm. It carries out the reaction L-glutamate + ATP = L-glutamyl 5-phosphate + ADP. Its pathway is amino-acid biosynthesis; L-proline biosynthesis; L-glutamate 5-semialdehyde from L-glutamate: step 1/2. Functionally, catalyzes the transfer of a phosphate group to glutamate to form L-glutamate 5-phosphate. This chain is Glutamate 5-kinase, found in Corynebacterium efficiens (strain DSM 44549 / YS-314 / AJ 12310 / JCM 11189 / NBRC 100395).